Here is a 37-residue protein sequence, read N- to C-terminus: uncharacterized protein (37 aa).

The disordered stretch occupies residues 1 to 37; it reads MGQVEKARQGQFARPHHSDSQRRVRAWSRIQRRARSF. The span at 23–37 shows a compositional bias: basic residues; it reads RVRAWSRIQRRARSF.

This is an uncharacterized protein from Bacillus phage phi105 (Bacteriophage phi-105).